We begin with the raw amino-acid sequence, 722 residues long: Mating-type switching protein swi2 (722 aa).

Disordered regions lie at residues 1–35 (MNVN…GVGS) and 301–342 (SEEF…PLPS). A compositionally biased stretch (polar residues) spans 9 to 22 (SIPVNTGSESISSN). Residues 302–316 (EEFDFEPSREDEDFP) show a composition bias toward acidic residues. The segment covering 319–332 (TSDSTGQDPLSSEP) has biased composition (polar residues).

In terms of assembly, interacts with swi5 and rhp51.

Its function is as follows. Required for normal mating-type switching. This is Mating-type switching protein swi2 (swi2) from Schizosaccharomyces pombe (strain 972 / ATCC 24843) (Fission yeast).